A 365-amino-acid chain; its full sequence is MAPWTLWRCCQRVVGWVPVLFITFVVVWSYYAYVVELCVFTIFGNEENGKTVVYLVAFHLFFVMFVWSYWMTIFTSPASPSKEFYLSNSEKERYEKEFSQERQQEILRRAARALPIYTTSASKTIRYCEKCQLIKPDRAHHCSACDSCILKMDHHCPWVNNCVGFSNYKFFLLFLLYSLLYCLFVAATVLEYFIKFWTNELTDTRAKFHVLFLFFVSAMFFISVLSLFSYHCWLVGKNRTTIESFRAPTFSYGPDGNGFSLGCSKNWRQVFGDEKKYWLLPIFSSLGDGCSFPTRLVGMDPEQASVTNQNEYARSSGSNQPFPIKPLSESKNRLLDSESQWLENGAEEGIVKSGTNNHVTVAIEN.

The Cytoplasmic portion of the chain corresponds to 1–14; the sequence is MAPWTLWRCCQRVV. Residues 15–35 traverse the membrane as a helical segment; sequence GWVPVLFITFVVVWSYYAYVV. Residues 36 to 53 lie on the Lumenal side of the membrane; the sequence is ELCVFTIFGNEENGKTVV. The helical transmembrane segment at 54–74 threads the bilayer; that stretch reads YLVAFHLFFVMFVWSYWMTIF. At 75–169 the chain is on the cytoplasmic side; it reads TSPASPSKEF…NNCVGFSNYK (95 aa). Positions 126 to 176 constitute a DHHC domain; it reads RYCEKCQLIKPDRAHHCSACDSCILKMDHHCPWVNNCVGFSNYKFFLLFLL. Cys128 and Cys131 together coordinate Zn(2+). Substrate-binding positions include Lys135 and 140–143; that span reads HHCS. Zn(2+) contacts are provided by His141, Cys142, Cys145, Cys148, and His155. The active-site S-palmitoyl cysteine intermediate is the Cys156. Cys162 serves as a coordination point for Zn(2+). A helical transmembrane segment spans residues 170–190; the sequence is FFLLFLLYSLLYCLFVAATVL. Topologically, residues 191 to 207 are lumenal; the sequence is EYFIKFWTNELTDTRAK. The chain crosses the membrane as a helical span at residues 208–231; sequence FHVLFLFFVSAMFFISVLSLFSYH. Residues 232-365 lie on the Cytoplasmic side of the membrane; sequence CWLVGKNRTT…NNHVTVAIEN (134 aa). Ser305, Ser330, and Ser339 each carry phosphoserine.

Belongs to the DHHC palmitoyltransferase family. Autopalmitoylated (in vitro).

The protein resides in the golgi apparatus membrane. It localises to the cell membrane. The protein localises to the cytoplasm. It is found in the perinuclear region. Its subcellular location is the endoplasmic reticulum membrane. The protein resides in the endoplasmic reticulum-Golgi intermediate compartment membrane. It carries out the reaction L-cysteinyl-[protein] + hexadecanoyl-CoA = S-hexadecanoyl-L-cysteinyl-[protein] + CoA. It catalyses the reaction L-cysteinyl-[protein] + tetradecanoyl-CoA = S-tetradecanoyl-L-cysteinyl-[protein] + CoA. The catalysed reaction is L-cysteinyl-[protein] + octadecanoyl-CoA = S-octadecanoyl-L-cysteinyl-[protein] + CoA. In terms of biological role, palmitoyltransferase that could catalyze the addition of palmitate onto various protein substrates. Catalyzes palmitoylation of Cys residues in the cytoplasmic C-terminus of EGFR, and modulates the duration of EGFR signaling by modulating palmitoylation-dependent EGFR internalization and degradation. Has a preference for acyl-CoA with C16 fatty acid chains. Can also utilize acyl-CoA with C14 and C18 fatty acid chains. May palmitoylate CALHM1 subunit of gustatory voltage-gated ion channels and modulate channel gating and kinetics. Functionally, (Microbial infection) Dominant palmitoyltransferase responsible for lipidation of SARS coronavirus-2/SARS-CoV-2 spike protein. Through a sequential action with ZDHHC9, rapidly and efficiently palmitoylates spike protein following its synthesis in the endoplasmic reticulum (ER). In the infected cell, promotes spike biogenesis by protecting it from premature ER degradation, increases half-life and controls the lipid organization of its immediate membrane environment. Once the virus has formed, spike palmitoylation controls fusion with the target cell. The polypeptide is Palmitoyltransferase ZDHHC20 (Homo sapiens (Human)).